We begin with the raw amino-acid sequence, 153 residues long: Ribosome maturation factor RimP (153 aa).

Belongs to the RimP family.

The protein resides in the cytoplasm. Required for maturation of 30S ribosomal subunits. This chain is Ribosome maturation factor RimP, found in Clostridioides difficile (strain 630) (Peptoclostridium difficile).